Consider the following 118-residue polypeptide: UPF0102 protein Csac_2148 (118 aa).

This sequence belongs to the UPF0102 family.

The polypeptide is UPF0102 protein Csac_2148 (Caldicellulosiruptor saccharolyticus (strain ATCC 43494 / DSM 8903 / Tp8T 6331)).